A 172-amino-acid chain; its full sequence is Secretory-abundant heat soluble protein 64681 (172 aa).

The first 19 residues, 1–19 (MSRTIVALILLGLAALAAA), serve as a signal peptide directing secretion. The tract at residues 30–59 (EWAGKAWLGKWVSTDRSENWDAFVEALGLP) is SAHS-c1. An SAHS-c2 region spans residues 74–102 (WKEGDHYHHQIIIADKSYKQDIQFKLGEE). 2 N-linked (GlcNAc...) asparagine glycosylation sites follow: Asn108 and Asn133. Positions 115 to 164 (KYTEVGDNLQNEVKIPSKNKTISDSYVVKGDELEKTYKINDVVAKRWYKK) are SAHS-c3.

This sequence belongs to the Secretory-abundant heat soluble protein (SAHS) family.

The protein localises to the secreted. In terms of biological role, secreted heat soluble protein acting as a molecular shield in water-deficient condition. Tardigrade-specific intrinsically disordered proteins (TDPs) are essential for desiccation tolerance by forming non-crystalline amorphous solids upon desiccation, and this vitrified state mirrors their protective capabilities. In Hypsibius exemplaris (Freshwater tardigrade), this protein is Secretory-abundant heat soluble protein 64681.